Consider the following 191-residue polypeptide: uncharacterized protein (191 aa).

This is an uncharacterized protein from Histophilus somni (Haemophilus somnus).